Consider the following 273-residue polypeptide: Bis(5'-nucleosyl)-tetraphosphatase, symmetrical (273 aa).

Belongs to the Ap4A hydrolase family.

It carries out the reaction P(1),P(4)-bis(5'-adenosyl) tetraphosphate + H2O = 2 ADP + 2 H(+). Its function is as follows. Hydrolyzes diadenosine 5',5'''-P1,P4-tetraphosphate to yield ADP. The polypeptide is Bis(5'-nucleosyl)-tetraphosphatase, symmetrical (Histophilus somni (strain 2336) (Haemophilus somnus)).